The following is an 819-amino-acid chain: Ion-translocating oxidoreductase complex subunit C (819 aa).

4Fe-4S ferredoxin-type domains are found at residues 368–398 (EYAE…QQLY) and 408–437 (KSEE…IQYF). Residues Cys378, Cys381, Cys384, Cys388, Cys417, Cys420, Cys423, and Cys427 each coordinate [4Fe-4S] cluster. Composition is skewed to basic and acidic residues over residues 465 to 477 (QARM…ERKA) and 485 to 513 (ARRE…KANE). Disordered stretches follow at residues 465-568 (QARM…NAKK), 580-677 (AKKL…TALD), and 692-793 (AKKL…PKKA). Composition is skewed to polar residues over residues 554 to 565 (VENQEQQTQPTN) and 587 to 601 (NSTS…TAEN). Residues 602–614 (QVEKTKSAVEKTQ) show a composition bias toward basic and acidic residues. Positions 641-656 (QTNSTSEAISNSQTAE) are enriched in polar residues. Basic and acidic residues predominate over residues 658–671 (EVEKTKSAVEKTEE). Composition is skewed to polar residues over residues 699–712 (NSAS…QTAE) and 755–768 (NSTS…QTAE). Basic and acidic residues predominate over residues 770 to 782 (EVEKTKSAVEKTQ).

Belongs to the 4Fe4S bacterial-type ferredoxin family. RnfC subfamily. As to quaternary structure, the complex is composed of six subunits: RnfA, RnfB, RnfC, RnfD, RnfE and RnfG. The cofactor is [4Fe-4S] cluster.

Its subcellular location is the cell inner membrane. Functionally, part of a membrane-bound complex that couples electron transfer with translocation of ions across the membrane. This chain is Ion-translocating oxidoreductase complex subunit C, found in Haemophilus influenzae (strain ATCC 51907 / DSM 11121 / KW20 / Rd).